The primary structure comprises 288 residues: NAD kinase (288 aa).

The Proton acceptor role is filled by aspartate 70. Residues 70 to 71, 144 to 145, arginine 155, lysine 172, aspartate 174, 185 to 190, and glutamine 245 each bind NAD(+); these read DG, ND, and TGYSLS.

This sequence belongs to the NAD kinase family. It depends on a divalent metal cation as a cofactor.

Its subcellular location is the cytoplasm. It catalyses the reaction NAD(+) + ATP = ADP + NADP(+) + H(+). Its function is as follows. Involved in the regulation of the intracellular balance of NAD and NADP, and is a key enzyme in the biosynthesis of NADP. Catalyzes specifically the phosphorylation on 2'-hydroxyl of the adenosine moiety of NAD to yield NADP. The sequence is that of NAD kinase from Geobacter sp. (strain M21).